The chain runs to 273 residues: Protein FAM210A (273 aa).

A disordered region spans residues 95 to 116; it reads VLSSSSTSQETPSEKKEEPDPL. Basic and acidic residues predominate over residues 106-116; the sequence is PSEKKEEPDPL. The region spanning 118-230 is the DUF1279 domain; the sequence is DKSISLYQRF…GYMSTPPPVK (113 aa). Residues 138 to 158 traverse the membrane as a helical segment; that stretch reads LIPVHLITSGIWFGTFYYASI. Residues 233–272 adopt a coiled-coil conformation; the sequence is LQGRMEETKELISEKMEETKDRLTEKLQETKEKVSFKKKV. Residues 247 to 273 are disordered; the sequence is KMEETKDRLTEKLQETKEKVSFKKKVE.

This sequence belongs to the FAM210 family. As to quaternary structure, interacts with ATAD3A.

The protein resides in the membrane. Its subcellular location is the mitochondrion. The protein localises to the cytoplasm. In terms of biological role, may play a role in the structure and strength of both muscle and bone. This is Protein FAM210A (Fam210a) from Rattus norvegicus (Rat).